The primary structure comprises 389 residues: Epidermis-specific secreted glycoprotein EP1 (389 aa).

An N-terminal signal peptide occupies residues 1-24 (MARFFPLTLTILLFFIQRIDFCHT). Asn29 carries N-linked (GlcNAc...) (complex) asparagine glycosylation. One can recognise a Bulb-type lectin domain in the interval 88–193 (MRWVWEANRG…ASPGENVNGP (106 aa)). Asn103, Asn230, and Asn235 each carry an N-linked (GlcNAc...) asparagine glycan. N-linked (GlcNAc...) (high mannose) asparagine glycosylation is present at Asn274.

In 14-day old seedlings, expressed in the epidermis and apical dome of the shoot and in the hypocotyl, cotyledon and epidermis of the root. In developing seeds, expressed in both the inner and outer epidermis of the integument.

The protein resides in the secreted. May be involved in the limitation of water flow through the outer epidermal cell wall, either by direct modification of wall structure or as a signal instructing the protoplast to restrict water transport across the cell wall. This chain is Epidermis-specific secreted glycoprotein EP1 (EP1), found in Daucus carota (Wild carrot).